A 189-amino-acid chain; its full sequence is Holliday junction branch migration complex subunit RuvA (189 aa).

A domain I region spans residues 1–62 (MIVALKGNIE…EEAWSLYGFA (62 aa)). The segment at 63-138 (EEAEKRVFDT…FSLSLQEGSK (76 aa)) is domain II. The flexible linker stretch occupies residues 138–139 (KA). The tract at residues 140–189 (STPPVFEESRLALESLGFKSELIAKALQNIQATTTQEIIKEALKKLQTLR) is domain III.

This sequence belongs to the RuvA family. Homotetramer. Forms an RuvA(8)-RuvB(12)-Holliday junction (HJ) complex. HJ DNA is sandwiched between 2 RuvA tetramers; dsDNA enters through RuvA and exits via RuvB. An RuvB hexamer assembles on each DNA strand where it exits the tetramer. Each RuvB hexamer is contacted by two RuvA subunits (via domain III) on 2 adjacent RuvB subunits; this complex drives branch migration. In the full resolvosome a probable DNA-RuvA(4)-RuvB(12)-RuvC(2) complex forms which resolves the HJ.

It localises to the cytoplasm. Functionally, the RuvA-RuvB-RuvC complex processes Holliday junction (HJ) DNA during genetic recombination and DNA repair, while the RuvA-RuvB complex plays an important role in the rescue of blocked DNA replication forks via replication fork reversal (RFR). RuvA specifically binds to HJ cruciform DNA, conferring on it an open structure. The RuvB hexamer acts as an ATP-dependent pump, pulling dsDNA into and through the RuvAB complex. HJ branch migration allows RuvC to scan DNA until it finds its consensus sequence, where it cleaves and resolves the cruciform DNA. This is Holliday junction branch migration complex subunit RuvA from Wolinella succinogenes (strain ATCC 29543 / DSM 1740 / CCUG 13145 / JCM 31913 / LMG 7466 / NCTC 11488 / FDC 602W) (Vibrio succinogenes).